Reading from the N-terminus, the 283-residue chain is 9,11-endoperoxide prostaglandin H2 reductase (283 aa).

NADP(+) contacts are provided by residues 23–24 (VW) and Asp48. The Proton donor role is filled by Tyr53. His111 contacts substrate. Residues 140 to 141 (SN), Gln162, 188 to 193 (WSPLGS), 234 to 236 (KST), and 240 to 244 (RIQEN) each bind NADP(+). The tract at residues 264-283 (NEDKRIGGDPDNFFPGGEEA) is disordered.

Belongs to the aldo/keto reductase family. In terms of assembly, monomer.

The protein resides in the cytoplasm. It carries out the reaction prostaglandin F2alpha + NADP(+) = prostaglandin H2 + NADPH + H(+). Its pathway is lipid metabolism; prostaglandin biosynthesis. Catalyzes the NADP-dependent formation of prostaglandin F2-alpha from prostaglandin H2. Also has aldo/ketoreductase activity towards the synthetic substrates 9,10-phenanthrenequinone and p-nitrobenzaldehyde. The polypeptide is 9,11-endoperoxide prostaglandin H2 reductase (Trypanosoma cruzi (strain CL Brener)).